A 377-amino-acid polypeptide reads, in one-letter code: Protein FAM199X-B (377 aa).

The span at 240–254 shows a compositional bias: basic and acidic residues; sequence KEHSPRQRCTRESWK. The segment at 240–350 is disordered; the sequence is KEHSPRQRCT…EQRQARKERI (111 aa). Residues 256–301 show a composition bias toward low complexity; sequence TSYSTASTSGVSGASVSSSSASMVSTASSTGSSGGNSASNSSANMS. Basic residues predominate over residues 319–338; that stretch reads DSKKRSKQRKLQQKALRKRQ. Residues 321–349 adopt a coiled-coil conformation; sequence KKRSKQRKLQQKALRKRQLKEQRQARKER. Over residues 339–350 the composition is skewed to basic and acidic residues; sequence LKEQRQARKERI.

The protein belongs to the FAM199 family.

The polypeptide is Protein FAM199X-B (fam199x-b) (Xenopus laevis (African clawed frog)).